A 686-amino-acid chain; its full sequence is Amyloid-beta-like protein (686 aa).

Residues 1–21 form the signal peptide; sequence MTVGKLMIGLLIPILVATVYA. Residues 22–621 lie on the Extracellular side of the membrane; that stretch reads EGSPAGSKRH…VERSASSVFQ (600 aa). The interval 32 to 125 is GFLD subdomain; sequence EKFIPMVAFS…PYHCIDGEFH (94 aa). Positions 32–197 constitute an E1 domain; the sequence is EKFIPMVAFS…TGVEFVCCPN (166 aa). Cystine bridges form between C42–C65, C76–C119, C101–C108, C135–C195, C146–C182, and C160–C194. An N-linked (GlcNAc...) asparagine glycan is attached at N84. Positions 133-197 are cuBD subdomain; that stretch reads HDCQFSHVNS…TGVEFVCCPN (65 aa). N201 carries an N-linked (GlcNAc...) asparagine glycan. Residues 201 to 245 form a disordered region; the sequence is NKTDVQKTKEDEDDDDDEDDAYEDDYSEESDEKDEEEPSSQDPYF. The segment covering 211–239 has biased composition (acidic residues); sequence DEDDDDDEDDAYEDDYSEESDEKDEEEPS. The 201-residue stretch at 240 to 440 folds into the E2 domain; it reads SQDPYFKIAN…KYVRPIAVTY (201 aa). The N-linked (GlcNAc...) asparagine glycan is linked to N249. Residues 252-255 and H382 contribute to the heparin site; that span reads NEHD. Residue N417 is glycosylated (N-linked (GlcNAc...) asparagine). Disordered stretches follow at residues 479–526 and 550–585; these read PTTT…DMKK and KLVE…NIKE. Positions 500–516 are enriched in acidic residues; that stretch reads SDSEEEADEYYEDEDDE. The segment covering 517 to 526 has biased composition (basic and acidic residues); that stretch reads QVKKTPDMKK. Residues 558–567 show a composition bias toward acidic residues; it reads TDDEDDDEDS. The chain crosses the membrane as a helical span at residues 622–642; sequence PYVLASAMFITAICIIAFAIT. The Cytoplasmic segment spans residues 643–686; that stretch reads NARRRRAMRGFIEVDVYTPEERHVAGMQVNGYENPTYSFFDSKA. The YENPXY motif signature appears at 674-679; the sequence is YENPTY.

Belongs to the APP family. Interacts (via cytoplasmic domain) with feh-1 (via PID 2 domain). Post-translationally, extracellular region is proteolytically cleaved. As to expression, expressed in the head, pharynx, spermatheca, uterus, vulva, tail and ventral neurons. Specifically expressed in nerve ring interneurons, the ventral cord, socket and amphids in the head, with strong expression in junctional cells, including the pharyngeal intestinal valve and uterine seam junction, and the excretory cell and weak expression in epidermal epithelial cells, including hyp7 cells, vulval cells, rectal valve cells, pharyngeal arcade cells and the tail hypodermis.

Its subcellular location is the membrane. The protein localises to the early endosome. In terms of biological role, required for normal developmental progression throughout all life stages. Specifically required for the molt stage during all larval transitions and morphogenesis. Acts with heterochronic genes, including members of the let-7 family, to regulate larval stage to adult transition. Acts synergistically with acn-1 in let-7 regulated postembryonic cell division of hypodermal seam cells. Acts in multiple pathways to influence daf-12 and daf-16 activity to in turn regulate physiological and reproductive processes such as body size and egg-laying. May play a role in neurotransmission. This chain is Amyloid-beta-like protein, found in Caenorhabditis elegans.